The following is a 189-amino-acid chain: Guanylate kinase (189 aa).

The region spanning 8–186 (GKLTVITGPS…AVIELESLMG (179 aa)) is the Guanylate kinase-like domain. 15 to 22 (GPSGVGKG) lines the ATP pocket.

This sequence belongs to the guanylate kinase family.

The protein localises to the cytoplasm. The catalysed reaction is GMP + ATP = GDP + ADP. Essential for recycling GMP and indirectly, cGMP. The polypeptide is Guanylate kinase (Prochlorococcus marinus (strain MIT 9313)).